We begin with the raw amino-acid sequence, 1065 residues long: MESEGETAGKPMKNIVPQTCQICSDNVGKTVDGDRFVACDICSFPVCRPCYEYERKDGNQSCPQCKTRYKRLKGSPAIPGDKDEDGLADEGTVEFNYPQKEKISERMLGWHLTRGKGEEMGEPQYDKEVSHNHLPRLTSRQDTSGEFSAASPERLSVSSTIAGGKRLPYSSDVNQSPNRRIVDPVGLGNVAWKERVDGWKMKQEKNTGPVSTQAASERGGVDIDASTDILADEALLNDEARQPLSRKVSIPSSRINPYRMVIMLRLVILCLFLHYRITNPVPNAFALWLVSVICEIWFALSWILDQFPKWFPVNRETYLDRLALRYDREGEPSQLAAVDIFVSTVDPLKEPPLVTANTVLSILAVDYPVDKVSCYVSDDGAAMLSFESLAETSEFARKWVPFCKKYSIEPRAPEWYFAAKIDYLKDKVQTSFVKDRRAMKREYEEFKIRINALVSKALKCPEEGWVMQDGTPWPGNNTRDHPGMIQVFLGQNGGLDAEGNELPRLVYVSREKRPGFQHHKKAGAMNALVRVSAVLTNGPFILNLDCDHYINNSKALREAMCFLMDPNLGKQVCYVQFPQRFDGIDKNDRYANRNTVFFDINLRGLDGIQGPVYVGTGCVFNRTALYGYEPPIKVKHKKPSLLSKLCGGSRKKNSKAKKESDKKKSGRHTDSTVPVFNLDDIEEGVEGAGFDDEKALLMSQMSLEKRFGQSAVFVASTLMENGGVPPSATPENLLKEAIHVISCGYEDKSDWGMEIGWIYGSVTEDILTGFKMHARGWRSIYCMPKLPAFKGSAPINLSDRLNQVLRWALGSVEILFSRHCPIWYGYNGRLKFLERFAYVNTTIYPITSIPLLMYCTLPAVCLFTNQFIIPQISNIASIWFLSLFLSIFATGILEMRWSGVGIDEWWRNEQFWVIGGVSAHLFAVFQGILKVLAGIDTNFTVTSKASDEDGDFAELYLFKWTTLLIPPTTLLIVNLVGVVAGVSYAINSGYQSWGPLFGKLFFAFWVIVHLYPFLKGLMGRQNRTPTIVVVWSVLLASIFSLLWVRIDPFTSRVTGPDILECGINC.

Over 1 to 260 (MESEGETAGK…PSSRINPYRM (260 aa)) the chain is Cytoplasmic. The residue at position 3 (serine 3) is a Phosphoserine. Zn(2+) contacts are provided by cysteine 20, cysteine 23, cysteine 39, cysteine 42, cysteine 47, cysteine 50, cysteine 62, and cysteine 65. The segment at 20–66 (CQICSDNVGKTVDGDRFVACDICSFPVCRPCYEYERKDGNQSCPQCK) adopts an RING-type; degenerate zinc-finger fold. A phosphoserine mark is found at serine 151, serine 211, and serine 216. A helical membrane pass occupies residues 261–281 (VIMLRLVILCLFLHYRITNPV). The Extracellular portion of the chain corresponds to 282–283 (PN). Residues 284–304 (AFALWLVSVICEIWFALSWIL) form a helical membrane-spanning segment. Over 305–842 (DQFPKWFPVN…LERFAYVNTT (538 aa)) the chain is Cytoplasmic. UDP-alpha-D-glucose contacts are provided by serine 343, lysine 349, glutamate 350, and aspartate 379. Aspartate 379 is an active-site residue. Residues 433-457 (VKDRRAMKREYEEFKIRINALVSKA) adopt a coiled-coil conformation. Lysine 520 serves as a coordination point for UDP-alpha-D-glucose. Mn(2+) contacts are provided by lysine 521 and aspartate 545. The disordered stretch occupies residues 643–672 (SKLCGGSRKKNSKAKKESDKKKSGRHTDST). Over residues 656–670 (AKKESDKKKSGRHTD) the composition is skewed to basic and acidic residues. Aspartate 765 is an active-site residue. The chain crosses the membrane as a helical span at residues 843 to 863 (IYPITSIPLLMYCTLPAVCLF). The Extracellular segment spans residues 864 to 874 (TNQFIIPQISN). Residues 875-895 (IASIWFLSLFLSIFATGILEM) form a helical membrane-spanning segment. The Cytoplasmic segment spans residues 896-910 (RWSGVGIDEWWRNEQ). The helical transmembrane segment at 911 to 931 (FWVIGGVSAHLFAVFQGILKV) threads the bilayer. The Extracellular portion of the chain corresponds to 932 to 961 (LAGIDTNFTVTSKASDEDGDFAELYLFKWT). Asparagine 938 carries N-linked (GlcNAc...) asparagine glycosylation. The chain crosses the membrane as a helical span at residues 962-982 (TLLIPPTTLLIVNLVGVVAGV). Residues 983–993 (SYAINSGYQSW) lie on the Cytoplasmic side of the membrane. The helical transmembrane segment at 994-1014 (GPLFGKLFFAFWVIVHLYPFL) threads the bilayer. Topologically, residues 1015–1023 (KGLMGRQNR) are extracellular. The helical transmembrane segment at 1024 to 1044 (TPTIVVVWSVLLASIFSLLWV) threads the bilayer. At 1045–1065 (RIDPFTSRVTGPDILECGINC) the chain is on the cytoplasmic side.

It belongs to the glycosyltransferase 2 family. Plant cellulose synthase subfamily. In terms of assembly, homodimer. Interacts with CESA1 and CESA6. Interacts with STL1 and STL2, but not with GOT1. Binds to CSI1 and CSI3. Interacts with PAT24/TIP1. It depends on Zn(2+) as a cofactor. The cofactor is Mn(2+). In terms of processing, palmitoylated, in part by PAT24/TIP1. Expressed in young plants, flowers and roots, and to a lower extent in leaves and stems. Localized in all cells except meristematic cells. Accumulates particularly in root caps, root hairs, epidermal layer, midveins of leaves and anthers. Not present in old tissues.

It localises to the cell membrane. The protein resides in the golgi apparatus membrane. It carries out the reaction [(1-&gt;4)-beta-D-glucosyl](n) + UDP-alpha-D-glucose = [(1-&gt;4)-beta-D-glucosyl](n+1) + UDP + H(+). It participates in glycan metabolism; plant cellulose biosynthesis. In terms of biological role, catalytic subunit of cellulose synthase terminal complexes ('rosettes'), required for beta-1,4-glucan microfibril crystallization, a major mechanism of the cell wall formation. Involved in the primary cell wall formation, especially in roots. The polypeptide is Cellulose synthase A catalytic subunit 3 [UDP-forming] (Arabidopsis thaliana (Mouse-ear cress)).